A 276-amino-acid chain; its full sequence is Putative glycosyltransferase 6 domain-containing protein 1 (276 aa).

Residues 1–6 (MNSKRM) are Cytoplasmic-facing. A helical; Signal-anchor for type II membrane protein transmembrane segment spans residues 7–23 (LLLVLFAFSLMLVERYF). The Lumenal portion of the chain corresponds to 24–276 (RNHQVEELRL…NKYFYLNKPT (253 aa)). Asparagine 74 is a glycosylation site (N-linked (GlcNAc...) asparagine). Substrate-binding positions include 82-87 (FATGRF), 173-175 (AAN), and 195-198 (HAWW). Glutamate 263 functions as the Nucleophile in the catalytic mechanism.

It belongs to the glycosyltransferase 6 family. Mn(2+) serves as cofactor. Expressed in both healthy and inflamed gingival tissue samples at similar levels, with higher expression in the gingival connective tissue compared to gingival epithelium. Strongest expression in testis, followed by leukocytes.

The protein localises to the membrane. The protein is Putative glycosyltransferase 6 domain-containing protein 1 (GLT6D1) of Homo sapiens (Human).